The following is a 466-amino-acid chain: Signal recognition particle 54 kDa protein (466 aa).

Residues 104–111 (GLQGSGKT), 184–188 (DTAGR), and 242–245 (TKLD) contribute to the GTP site. The disordered stretch occupies residues 444-466 (MQQGGGGGGGGGGGLGGMGPFGD). Residues 446–466 (QGGGGGGGGGGGLGGMGPFGD) show a composition bias toward gly residues.

The protein belongs to the GTP-binding SRP family. SRP54 subfamily. Part of the signal recognition particle protein translocation system, which is composed of SRP and FtsY. Archaeal SRP consists of a 7S RNA molecule of 300 nucleotides and two protein subunits: SRP54 and SRP19.

It is found in the cytoplasm. The enzyme catalyses GTP + H2O = GDP + phosphate + H(+). Involved in targeting and insertion of nascent membrane proteins into the cytoplasmic membrane. Binds to the hydrophobic signal sequence of the ribosome-nascent chain (RNC) as it emerges from the ribosomes. The SRP-RNC complex is then targeted to the cytoplasmic membrane where it interacts with the SRP receptor FtsY. This Natronomonas pharaonis (strain ATCC 35678 / DSM 2160 / CIP 103997 / JCM 8858 / NBRC 14720 / NCIMB 2260 / Gabara) (Halobacterium pharaonis) protein is Signal recognition particle 54 kDa protein.